A 395-amino-acid polypeptide reads, in one-letter code: MCDQTFLAITFGPCDKCSENKPLMNIYLKNEPINYCSLCVEMMACQGLAKGETVQSLKAESESLKAKLEEERAKLHDVELHQVAEKMEALGQFVMKTRRTLKGHGNKVLCMDWCRDKRRIVSSSQDGKVIVWDAYTTNKEHAVTMPCTWVMACAYAPSGCAVACGGLDNKCSVYPLSLDKNENLASKKKSVAMHTNYLSSCSFTKSDMQILTSSGDGTCALWDVESGQLLQSFHGHSADVLSLDLAPSETGSTFVSGGCDKKANVWDMRSGQNVQSFETHDSDINSVKYYPSGDAFASGSDDATCRLYDLRADREVAIYSKDSIIFGASSVDFSLSGRLLFAGYNDYNINVWDVLKGTRVAILFGHENRVSTVRVSPDGTAFCSGSWDNTLRIWA.

WD repeat units lie at residues 103 to 142 (GHGNKVLCMDWCRDKRRIVSSSQDGKVIVWDAYTTNKEHA), 145 to 184 (MPCTWVMACAYAPSGCAVACGGLDNKCSVYPLSLDKNENL), 193 to 234 (MHTN…QSFH), 235 to 276 (GHSA…NVQS), 279 to 318 (THDSDINSVKYYPSGDAFASGSDDATCRLYDLRADREVAI), 320 to 362 (SKDS…RVAI), and 365 to 395 (GHENRVSTVRVSPDGTAFCSGSWDNTLRIWA).

The protein belongs to the WD repeat G protein beta family. As to quaternary structure, may interact with RGS9; this interaction stabilizes both proteins and increases RGS9 GTPase-activating protein (GAP) activity, hence accelerating the deactivation of D(2) dopamine receptor-mediated signaling.

The protein localises to the membrane. Its function is as follows. Enhances GTPase-activating protein (GAP) activity of regulator of G protein signaling (RGS) proteins, such as RGS7 and RGS9, hence involved in the termination of the signaling initiated by the G protein coupled receptors (GPCRs) by accelerating the GTP hydrolysis on the G-alpha subunits, thereby promoting their inactivation. Increases RGS7 GTPase-activating protein (GAP) activity, thereby regulating mood and cognition. Increases RGS9 GTPase-activating protein (GAP) activity, hence contributes to the deactivation of G protein signaling initiated by D(2) dopamine receptors. Along with gnb5a, plays an important role in neuronal signaling, including in the parasympathetic, but not sympathetic, control of heart rate. This chain is Guanine nucleotide-binding protein subunit beta-5b, found in Danio rerio (Zebrafish).